Here is a 407-residue protein sequence, read N- to C-terminus: Methylenetetrahydrofolate--tRNA-(uracil-5-)-methyltransferase TrmFO (407 aa).

FAD is bound at residue 9–14 (GAGLAG).

It belongs to the MnmG family. TrmFO subfamily. FAD is required as a cofactor.

It localises to the cytoplasm. It carries out the reaction uridine(54) in tRNA + (6R)-5,10-methylene-5,6,7,8-tetrahydrofolate + NADH + H(+) = 5-methyluridine(54) in tRNA + (6S)-5,6,7,8-tetrahydrofolate + NAD(+). It catalyses the reaction uridine(54) in tRNA + (6R)-5,10-methylene-5,6,7,8-tetrahydrofolate + NADPH + H(+) = 5-methyluridine(54) in tRNA + (6S)-5,6,7,8-tetrahydrofolate + NADP(+). Its function is as follows. Catalyzes the folate-dependent formation of 5-methyl-uridine at position 54 (M-5-U54) in all tRNAs. The protein is Methylenetetrahydrofolate--tRNA-(uracil-5-)-methyltransferase TrmFO of Lactobacillus helveticus (strain DPC 4571).